The chain runs to 496 residues: Glycerol kinase (496 aa).

Thr-11 is an ADP binding site. 3 residues coordinate ATP: Thr-11, Ser-12, and Ser-13. Sn-glycerol 3-phosphate is bound at residue Thr-11. Position 15 (Arg-15) interacts with ADP. Residues Arg-81, Glu-82, Tyr-133, and Asp-242 each contribute to the sn-glycerol 3-phosphate site. 5 residues coordinate glycerol: Arg-81, Glu-82, Tyr-133, Asp-242, and Gln-243. Positions 264 and 307 each coordinate ADP. ATP-binding residues include Thr-264, Gly-307, Gln-311, and Gly-412. Residues Gly-412 and Asn-416 each coordinate ADP.

It belongs to the FGGY kinase family.

The enzyme catalyses glycerol + ATP = sn-glycerol 3-phosphate + ADP + H(+). The protein operates within polyol metabolism; glycerol degradation via glycerol kinase pathway; sn-glycerol 3-phosphate from glycerol: step 1/1. Inhibited by fructose 1,6-bisphosphate (FBP). Key enzyme in the regulation of glycerol uptake and metabolism. Catalyzes the phosphorylation of glycerol to yield sn-glycerol 3-phosphate. The chain is Glycerol kinase from Albidiferax ferrireducens (strain ATCC BAA-621 / DSM 15236 / T118) (Rhodoferax ferrireducens).